A 137-amino-acid chain; its full sequence is Urease subunit beta (137 aa).

Positions 113–137 (NGHPNAGVKNDEGKQNANKESGDNR) are disordered.

This sequence belongs to the urease beta subunit family. In terms of assembly, heterotrimer of UreA (gamma), UreB (beta) and UreC (alpha) subunits. Three heterotrimers associate to form the active enzyme.

The protein resides in the cytoplasm. It catalyses the reaction urea + 2 H2O + H(+) = hydrogencarbonate + 2 NH4(+). It functions in the pathway nitrogen metabolism; urea degradation; CO(2) and NH(3) from urea (urease route): step 1/1. This Staphylococcus carnosus (strain TM300) protein is Urease subunit beta.